Consider the following 317-residue polypeptide: L-lactate dehydrogenase (317 aa).

Residues valine 18, aspartate 39, lysine 44, tyrosine 69, and 83-84 (GA) contribute to the NAD(+) site. Substrate-binding positions include glutamine 86, arginine 92, and 124-127 (NPVD). NAD(+) is bound by residues 122-124 (VTN) and serine 147. Position 152-155 (152-155 (DTAR)) interacts with substrate. Residues arginine 157 and histidine 172 each contribute to the beta-D-fructose 1,6-bisphosphate site. The Proton acceptor role is filled by histidine 179. Position 225 is a phosphotyrosine (tyrosine 225). Threonine 234 is a substrate binding site.

This sequence belongs to the LDH/MDH superfamily. LDH family. Homotetramer.

The protein localises to the cytoplasm. The catalysed reaction is (S)-lactate + NAD(+) = pyruvate + NADH + H(+). The protein operates within fermentation; pyruvate fermentation to lactate; (S)-lactate from pyruvate: step 1/1. Its activity is regulated as follows. Allosterically activated by fructose 1,6-bisphosphate (FBP). Functionally, catalyzes the conversion of lactate to pyruvate. In Acetivibrio thermocellus (strain ATCC 27405 / DSM 1237 / JCM 9322 / NBRC 103400 / NCIMB 10682 / NRRL B-4536 / VPI 7372) (Clostridium thermocellum), this protein is L-lactate dehydrogenase.